Consider the following 434-residue polypeptide: Nuclear distribution protein PAC1 (434 aa).

One can recognise a LisH domain in the interval 8–40 (QKDDLHKAMLDYLYANNHTAAFNALKESAGITY). The stretch at 57–83 (TSVIRLQKKIMELENRNAALQEELSMS) forms a coiled coil. WD repeat units follow at residues 106–147 (GHRA…RTLK), 149–187 (HTKP…KNTK), 191–230 (GHDH…QVRT), 233–272 (GHSE…PKSE), 275–334 (GHEN…MIRN), 337–378 (GHDN…RIVE), and 401–434 (KKVN…IWLP).

It belongs to the WD repeat LIS1/nudF family. Self-associates. Interacts with NDL1 and dynein.

The protein localises to the cytoplasm. It is found in the cytoskeleton. It localises to the spindle pole. Functionally, positively regulates the activity of the minus-end directed microtubule motor protein dynein. May enhance dynein-mediated microtubule sliding by targeting dynein to the microtubule plus end. Required for nuclear migration during vegetative growth as well as development. Required for retrograde early endosome (EE) transport from the hyphal tip. Required for localization of dynein to the mitotic spindle poles. Recruits additional proteins to the dynein complex at SPBs. This chain is Nuclear distribution protein PAC1, found in Coprinopsis cinerea (strain Okayama-7 / 130 / ATCC MYA-4618 / FGSC 9003) (Inky cap fungus).